The following is a 127-amino-acid chain: Auxin-responsive protein SAUR76 (127 aa).

Positions 20-40 (SFNTKPNQPPAQTNHSRSSAV) are disordered.

It belongs to the ARG7 family. Expressed in cotyledons, hypocotyls and roots of young seedlings. Expressed in emerging lateral root, leaves, flowers, stamens and filaments.

Its subcellular location is the nucleus. It is found in the cytoplasm. The protein localises to the cell membrane. In terms of biological role, may be involved in the regulation of ethylene receptor signaling. Promotes cell expansion and plant growth. Involved in the regulation of cell elongation. This Arabidopsis thaliana (Mouse-ear cress) protein is Auxin-responsive protein SAUR76.